Here is a 544-residue protein sequence, read N- to C-terminus: MATVDSQRPKSAFITGITGQDGSYLVDILLEKGYQVHGLVRPSSQRRQFLSHPLRRGITLHYGDMTDSATLMQILSSITVDEVYHLAAQSHVAVSFQTPLLTCDINALGTLRLLEVLRILGLEKRVRFYSAVTSELFGNEAPAPQTEETPMAPVSPYAVSKLFQYAITANFREAYGFHASNGILFNHESPRRGTTFVTRKITTQVALIACGLSESFELGNLNATRDWGHAQDYMEGVWMMLQQPEGSDYVLATGQASSVRDFVEAAFKVIGTKIEWSGENESEMGTEVGTGKVRVRVNPEYYRPVENENLLGSAVKAKAAFGWEPKYTLESLVEEMVLSDIELVKSGKMFSTTNLDWLIDRSAEDGETTSAVNSSPSSTAGDTYKASDGWSTSGAEGSEQTECSSVAEGTDIPVPEKVELLPSAGVEEGGHDVAIDVLGKDDCGKVVLTLDEQDKPNENDEGHLAVVAVEEATATTPFVGTDLIKMDSSISIEPATPSPSTVAESERRVNLTITIDGEGRVTKVYNVPDFTAEEKVTLPTPVTA.

Residues 16–21 (GITGQD), arginine 41, 64–65 (DM), and 86–90 (LAAQS) contribute to the NADP(+) site. Serine 90 serves as a coordination point for substrate. Catalysis depends on nucleophile residues glutamate 135 and tyrosine 157. Tyrosine 157 lines the substrate pocket. Lysine 161 is a binding site for NADP(+). Asparagine 186 contacts substrate. NADP(+)-binding residues include histidine 187 and arginine 192. Residues 192–200 (RGTTFVTRK), glycine 219, arginine 225, and 303–306 (RPVE) contribute to the substrate site. Residues 366–406 (GETTSAVNSSPSSTAGDTYKASDGWSTSGAEGSEQTECSSV) are disordered. Polar residues-rich tracts occupy residues 368 to 381 (TTSAVNSSPSSTAG) and 389 to 404 (GWSTSGAEGSEQTECS).

This sequence belongs to the NAD(P)-dependent epimerase/dehydratase family. GDP-mannose 4,6-dehydratase subfamily. It depends on NADP(+) as a cofactor.

It catalyses the reaction GDP-alpha-D-mannose = GDP-4-dehydro-alpha-D-rhamnose + H2O. It functions in the pathway antibiotic biosynthesis. In terms of biological role, GDP-mannose 4,6-dehydratase; part of the gene cluster that mediates the biosynthesis of sordarin and hypoxysordarin, glycoside antibiotics with a unique tetracyclic diterpene aglycone structure. First, the geranylgeranyl diphosphate synthase sdnC constructs GGDP from farnesyl diphosphate and isopentenyl diphosphate. The diterpene cyclase sdnA then catalyzes the cyclization of GGDP to afford cycloaraneosene. Cycloaraneosene is then hydroxylated four times by the putative cytochrome P450 monooxygenases sdnB, sdnE, sdnF and sdnH to give a hydroxylated cycloaraneosene derivative such as cycloaraneosene-8,9,13,19-tetraol. Although the order of the hydroxylations is unclear, at least C8, C9 and C13 of the cycloaraneosene skeleton are hydroxylated before the sordaricin formation. Dehydration of the 13-hydroxy group of the hydroxylated cycloaraneosene derivative might be catalyzed by an unassigned hypothetical protein such as sdnG and sdnP to construct the cyclopentadiene moiety. The FAD-dependent oxidoreductase sdnN is proposed to catalyze the oxidation at C9 of the hydroxylated cycloaraneosene derivative and also catalyze the Baeyer-Villiger oxidation to give the lactone intermediate. The presumed lactone intermediate would be hydrolyzed to give an acrolein moiety and a carboxylate moiety. Then, [4+2]cycloaddition would occur between the acrolein moiety and the cyclopentadiene moiety to give sordaricin. SdnN might also be involved in the [4+2]cycloaddition after the hypothesized oxidation to accommodate the oxidized product and prompt the [4+2]cycloaddition. GDP-6-deoxy-D-altrose may be biosynthesized from GDP-D-mannose by the putative GDP-mannose-4,6-dehydratase sdnI and the short-chain dehydrogenase sdnK. The glycosyltransferase sdnJ catalyzes the attachment of 6-deoxy-D-altrose onto the 19-hydroxy group of sordaricin to give 4'-O-demethylsordarin. The methyltransferase sdnD would complete the biosynthesis of sordarin. Sordarin can be further modified into hypoxysordarin. The unique acyl chain at the 3'-hydroxy group of hypoxysordarin would be constructed by an iterative type I PKS sdnO and the trans-acting polyketide methyltransferase sdnL. SdnL would be responsible for the introduction of an alpha-methyl group of the polyketide chain. Alternatively, the beta-lactamase-like protein sdnR might be responsible for the cleavage and transfer of the polyketide chain from the PKS sdnO to sordarin. Two putative cytochrome P450 monooxygenases, sdnQ and sdnT, might catalyze the epoxidations of the polyketide chain to complete the biosynthesis of hypoxysordarin. Transcriptional regulators sdnM and sdnS are presumably encoded for the transcriptional regulation of the expression of the sdn gene cluster. The chain is GDP-mannose 4,6-dehydratase sdnI from Sordaria araneosa (Pleurage araneosa).